The chain runs to 26 residues: AMP deaminase 1 (26 aa).

The protein belongs to the metallo-dependent hydrolases superfamily. Adenosine and AMP deaminases family. In terms of assembly, homotetramer. Requires Zn(2+) as cofactor.

It carries out the reaction AMP + H2O + H(+) = IMP + NH4(+). Its pathway is purine metabolism; IMP biosynthesis via salvage pathway; IMP from AMP: step 1/1. AMP deaminase plays a critical role in energy metabolism. The polypeptide is AMP deaminase 1 (AMPD1) (Oryctolagus cuniculus (Rabbit)).